Here is a 171-residue protein sequence, read N- to C-terminus: UPF0398 protein SEQ_1788 (171 aa).

Belongs to the UPF0398 family.

The protein is UPF0398 protein SEQ_1788 of Streptococcus equi subsp. equi (strain 4047).